A 92-amino-acid polypeptide reads, in one-letter code: Small ribosomal subunit protein uS19 (92 aa).

This sequence belongs to the universal ribosomal protein uS19 family.

Its function is as follows. Protein S19 forms a complex with S13 that binds strongly to the 16S ribosomal RNA. In Corynebacterium aurimucosum (strain ATCC 700975 / DSM 44827 / CIP 107346 / CN-1) (Corynebacterium nigricans), this protein is Small ribosomal subunit protein uS19.